Here is a 223-residue protein sequence, read N- to C-terminus: GRF1-interacting factor 3 (223 aa).

The tract at residues 179–223 (ANNAGPNDASGGGKPDGTNMSQSGADGQGGSAARHGGGDAKTEGK) is disordered. The span at 214–223 (GGGDAKTEGK) shows a compositional bias: basic and acidic residues.

Belongs to the SS18 family. In terms of assembly, interacts with GRF1. In terms of tissue distribution, predominantly expressed in shoot tips containing the shoot apical meristem (SAM) and flower buds. Also expressed in mature flowers.

Its function is as follows. Transcription coactivator that plays a role in the regulation of cell expansion in leaf and cotyledons tissues. Component of a network formed by miR396, the GRFs and their interacting factors (GIFs) acting in the regulation of meristem function, at least partially through the control of cell proliferation. GIFs are involved in the positive regulation of cell proliferation of lateral organs in a functionally redundant manner. This Arabidopsis thaliana (Mouse-ear cress) protein is GRF1-interacting factor 3 (GIF3).